An 826-amino-acid chain; its full sequence is Leucine--tRNA ligase (826 aa).

The short motif at 42-52 is the 'HIGH' region element; it reads PYPSGNLHMGH. Residues 581–585 carry the 'KMSKS' region motif; that stretch reads KMSKS. Lysine 584 is a binding site for ATP.

Belongs to the class-I aminoacyl-tRNA synthetase family.

It is found in the cytoplasm. The enzyme catalyses tRNA(Leu) + L-leucine + ATP = L-leucyl-tRNA(Leu) + AMP + diphosphate. This is Leucine--tRNA ligase from Desulforudis audaxviator (strain MP104C).